The primary structure comprises 591 residues: Probable translation initiation factor IF-2 (591 aa).

The 217-residue stretch at 7 to 223 folds into the tr-type G domain; it reads LRTPIVCVMG…LLGLAQKFLE (217 aa). A G1 region spans residues 16 to 23; that stretch reads GHVDHGKT. 16–23 serves as a coordination point for GTP; the sequence is GHVDHGKT. The tract at residues 41–45 is G2; the sequence is AITQH. The G3 stretch occupies residues 78–81; it reads DTPG. GTP-binding positions include 78–82 and 132–135; these read DTPGH and NKID. The tract at residues 132 to 135 is G4; the sequence is NKID. Residues 200–202 form a G5 region; the sequence is SAF.

The protein belongs to the TRAFAC class translation factor GTPase superfamily. Classic translation factor GTPase family. IF-2 subfamily.

Its function is as follows. Function in general translation initiation by promoting the binding of the formylmethionine-tRNA to ribosomes. Seems to function along with eIF-2. The sequence is that of Probable translation initiation factor IF-2 from Methanosarcina mazei (strain ATCC BAA-159 / DSM 3647 / Goe1 / Go1 / JCM 11833 / OCM 88) (Methanosarcina frisia).